Reading from the N-terminus, the 272-residue chain is Glutamate racemase (272 aa).

Substrate is bound by residues 10–11 (DS) and 42–43 (YG). Residue Cys74 is the Proton donor/acceptor of the active site. A substrate-binding site is contributed by 75 to 76 (NT). The active-site Proton donor/acceptor is the Cys185. Substrate is bound at residue 186–187 (TH).

Belongs to the aspartate/glutamate racemases family.

It carries out the reaction L-glutamate = D-glutamate. The protein operates within cell wall biogenesis; peptidoglycan biosynthesis. In terms of biological role, provides the (R)-glutamate required for cell wall biosynthesis. This Bacillus pumilus (strain SAFR-032) protein is Glutamate racemase.